Consider the following 422-residue polypeptide: Histidinol dehydrogenase (422 aa).

Tyr123, Gln183, and Asn206 together coordinate NAD(+). Substrate contacts are provided by Ser229, Gln251, and His254. Residues Gln251 and His254 each coordinate Zn(2+). Catalysis depends on proton acceptor residues Glu320 and His321. 4 residues coordinate substrate: His321, Asp354, Glu408, and His413. Asp354 provides a ligand contact to Zn(2+). Position 413 (His413) interacts with Zn(2+).

The protein belongs to the histidinol dehydrogenase family. Requires Zn(2+) as cofactor.

The catalysed reaction is L-histidinol + 2 NAD(+) + H2O = L-histidine + 2 NADH + 3 H(+). It participates in amino-acid biosynthesis; L-histidine biosynthesis; L-histidine from 5-phospho-alpha-D-ribose 1-diphosphate: step 9/9. In terms of biological role, catalyzes the sequential NAD-dependent oxidations of L-histidinol to L-histidinaldehyde and then to L-histidine. This Natronomonas pharaonis (strain ATCC 35678 / DSM 2160 / CIP 103997 / JCM 8858 / NBRC 14720 / NCIMB 2260 / Gabara) (Halobacterium pharaonis) protein is Histidinol dehydrogenase.